Reading from the N-terminus, the 504-residue chain is ATP synthase subunit alpha, chloroplastic (504 aa).

169-176 (GDRQTGKT) contacts ATP.

This sequence belongs to the ATPase alpha/beta chains family. F-type ATPases have 2 components, CF(1) - the catalytic core - and CF(0) - the membrane proton channel. CF(1) has five subunits: alpha(3), beta(3), gamma(1), delta(1), epsilon(1). CF(0) has four main subunits: a, b, b' and c.

The protein resides in the plastid. Its subcellular location is the chloroplast thylakoid membrane. The enzyme catalyses ATP + H2O + 4 H(+)(in) = ADP + phosphate + 5 H(+)(out). Functionally, produces ATP from ADP in the presence of a proton gradient across the membrane. The alpha chain is a regulatory subunit. This chain is ATP synthase subunit alpha, chloroplastic, found in Stigeoclonium helveticum (Green alga).